The following is a 522-amino-acid chain: 2-isopropylmalate synthase (522 aa).

Residues 5–267 (VIIFDTTLRD…ETGINAKEIH (263 aa)) form the Pyruvate carboxyltransferase domain. Residues D14, H202, H204, and N238 each contribute to the Mn(2+) site. The segment at 392-522 (QLQQLVVQSD…MHKNRELGGV (131 aa)) is regulatory domain.

It belongs to the alpha-IPM synthase/homocitrate synthase family. LeuA type 1 subfamily. In terms of assembly, homodimer. The cofactor is Mn(2+).

The protein localises to the cytoplasm. The catalysed reaction is 3-methyl-2-oxobutanoate + acetyl-CoA + H2O = (2S)-2-isopropylmalate + CoA + H(+). Its pathway is amino-acid biosynthesis; L-leucine biosynthesis; L-leucine from 3-methyl-2-oxobutanoate: step 1/4. Its function is as follows. Catalyzes the condensation of the acetyl group of acetyl-CoA with 3-methyl-2-oxobutanoate (2-ketoisovalerate) to form 3-carboxy-3-hydroxy-4-methylpentanoate (2-isopropylmalate). The polypeptide is 2-isopropylmalate synthase (Shewanella sp. (strain ANA-3)).